Consider the following 339-residue polypeptide: Ketol-acid reductoisomerase (NADP(+)) (339 aa).

In terms of domain architecture, KARI N-terminal Rossmann spans 1–182 (MRVYYDRDAD…GGGRAGIIET (182 aa)). Residues 24 to 27 (YGSQ), arginine 48, serine 51, threonine 53, and 83 to 86 (DELQ) each bind NADP(+). Residue histidine 108 is part of the active site. Position 134 (glycine 134) interacts with NADP(+). The KARI C-terminal knotted domain maps to 183–328 (SFKEECETDL…AKLREMMPWI (146 aa)). 4 residues coordinate Mg(2+): aspartate 191, glutamate 195, glutamate 227, and glutamate 231. A substrate-binding site is contributed by serine 252.

The protein belongs to the ketol-acid reductoisomerase family. The cofactor is Mg(2+).

The catalysed reaction is (2R)-2,3-dihydroxy-3-methylbutanoate + NADP(+) = (2S)-2-acetolactate + NADPH + H(+). The enzyme catalyses (2R,3R)-2,3-dihydroxy-3-methylpentanoate + NADP(+) = (S)-2-ethyl-2-hydroxy-3-oxobutanoate + NADPH + H(+). It participates in amino-acid biosynthesis; L-isoleucine biosynthesis; L-isoleucine from 2-oxobutanoate: step 2/4. The protein operates within amino-acid biosynthesis; L-valine biosynthesis; L-valine from pyruvate: step 2/4. Involved in the biosynthesis of branched-chain amino acids (BCAA). Catalyzes an alkyl-migration followed by a ketol-acid reduction of (S)-2-acetolactate (S2AL) to yield (R)-2,3-dihydroxy-isovalerate. In the isomerase reaction, S2AL is rearranged via a Mg-dependent methyl migration to produce 3-hydroxy-3-methyl-2-ketobutyrate (HMKB). In the reductase reaction, this 2-ketoacid undergoes a metal-dependent reduction by NADPH to yield (R)-2,3-dihydroxy-isovalerate. In Rhodopseudomonas palustris (strain BisB5), this protein is Ketol-acid reductoisomerase (NADP(+)).